The sequence spans 1444 residues: DNA polymerase III PolC-type (1444 aa).

Residues 421-577 (YVVFDVETTG…ADAEATGYLL (157 aa)) form the Exonuclease domain.

The protein belongs to the DNA polymerase type-C family. PolC subfamily.

Its subcellular location is the cytoplasm. It catalyses the reaction DNA(n) + a 2'-deoxyribonucleoside 5'-triphosphate = DNA(n+1) + diphosphate. Functionally, required for replicative DNA synthesis. This DNA polymerase also exhibits 3' to 5' exonuclease activity. In Lacticaseibacillus paracasei (strain ATCC 334 / BCRC 17002 / CCUG 31169 / CIP 107868 / KCTC 3260 / NRRL B-441) (Lactobacillus paracasei), this protein is DNA polymerase III PolC-type.